The sequence spans 135 residues: ATP synthase epsilon chain (135 aa).

The interval 91–122 (EAQKQLSEAEQAWSKFDGQPNSPDKIKAQQAF) is disordered.

It belongs to the ATPase epsilon chain family. As to quaternary structure, F-type ATPases have 2 components, CF(1) - the catalytic core - and CF(0) - the membrane proton channel. CF(1) has five subunits: alpha(3), beta(3), gamma(1), delta(1), epsilon(1). CF(0) has three main subunits: a, b and c.

It localises to the cellular thylakoid membrane. Produces ATP from ADP in the presence of a proton gradient across the membrane. The protein is ATP synthase epsilon chain of Synechococcus sp. (strain RCC307).